The primary structure comprises 156 residues: Flagellar assembly factor FliW (156 aa).

It belongs to the FliW family. In terms of assembly, interacts with translational regulator CsrA and flagellin(s).

It is found in the cytoplasm. Its function is as follows. Acts as an anti-CsrA protein, binds CsrA and prevents it from repressing translation of its target genes, one of which is flagellin. Binds to flagellin and participates in the assembly of the flagellum. The sequence is that of Flagellar assembly factor FliW from Syntrophomonas wolfei subsp. wolfei (strain DSM 2245B / Goettingen).